We begin with the raw amino-acid sequence, 2019 residues long: Sodium channel protein type 5 subunit alpha (2019 aa).

Residues 1–129 (MANFLLPRGT…VRRAAVKILV (129 aa)) lie on the Cytoplasmic side of the membrane. A disordered region spans residues 27–66 (RMAEKQARGSATSQESREGLPEEEAPRPQLDLQASKKLPD). Phosphoserine is present on Ser36. Thr38 is modified (phosphothreonine). Positions 41 to 52 (ESREGLPEEEAP) are enriched in basic and acidic residues. The stretch at 113–420 (VLSPFHPVRR…VVAMAYEEQN (308 aa)) is one I repeat. Residues 130-149 (HSLFSMLIMCTILTNCVFMA) traverse the membrane as a helical segment. Residues 150-157 (QHDPPPWT) lie on the Extracellular side of the membrane. A helical membrane pass occupies residues 158-179 (KYVEYTFTAIYTFESLVKILAR). Topologically, residues 180-188 (GFCLHAFTF) are cytoplasmic. A helical transmembrane segment spans residues 189–209 (LRDPWNWLDFSVIVMAYTTEF). The Extracellular segment spans residues 210–216 (VDLGNVS). Asn214 carries an N-linked (GlcNAc...) asparagine glycan. Residues 217-236 (ALRTFRVLRALKTISVISGL) traverse the membrane as a helical segment. At 237–249 (KTIVGALIQSVKK) the chain is on the cytoplasmic side. The chain crosses the membrane as a helical span at residues 250–272 (LADVMVLTVFCLSVFALIGLQLF). The Extracellular portion of the chain corresponds to 273–357 (MGNLRHKCVR…PDHGYTSFDS (85 aa)). Cysteines 280 and 335 form a disulfide. Residues Asn283, Asn288, Asn291, Asn318, and Asn328 are each glycosylated (N-linked (GlcNAc...) asparagine). The pore-forming intramembrane region spans 358–378 (FAWAFLALFRLMTQDCWERLY). The Extracellular portion of the chain corresponds to 379-386 (QQTLRSAG). A helical transmembrane segment spans residues 387–413 (KIYMIFFMLVIFLGSFYLVNLILAVVA). The Cytoplasmic portion of the chain corresponds to 414-719 (MAYEEQNQAT…VKFVVMDPFA (306 aa)). Phosphoserine occurs at positions 457, 460, 483, and 484. Disordered regions lie at residues 461-575 (LEMS…TQGQ) and 610-647 (EATS…TPQA). At Thr486 the chain carries Phosphothreonine. Positions 491 to 503 (DDRLPKSDSEDGP) are enriched in basic and acidic residues. 2 positions are modified to phosphoserine: Ser497 and Ser510. The span at 507–528 (NQLSLTHGLSRTSMRPRSSRGS) shows a compositional bias: polar residues. Arg526 is subject to Dimethylated arginine; alternate. Omega-N-methylarginine; alternate is present on Arg526. Phosphoserine occurs at positions 539 and 571. Ser664 and Ser667 each carry phosphoserine. One copy of the II repeat lies at 699–971 (CCPLWMSIKQ…QLALARIQRG (273 aa)). Residues 720–737 (DLTITMCIVLNTLFMALE) form a helical membrane-spanning segment. Over 738 to 746 (HYNMTAEFE) the chain is Extracellular. N-linked (GlcNAc...) asparagine glycosylation is present at Asn740. A helical transmembrane segment spans residues 747–769 (EMLQVGNLVFTGIFTAEMTFKII). The Cytoplasmic segment spans residues 770–775 (ALDPYY). A helical transmembrane segment spans residues 776 to 796 (YFQQGWNIFDSIIVILSLMEL). Residues 797–806 (GLSRMGNLSV) are Extracellular-facing. N-linked (GlcNAc...) asparagine glycosylation occurs at Asn803. Residues 807-821 (LRSFRLLRVFKLAKS) form a helical membrane-spanning segment. The Cytoplasmic segment spans residues 822–838 (WPTLNTLIKIIGNSVGA). A helical transmembrane segment spans residues 839–860 (LGNLTLVLAIIVFIFAVVGMQL). The Extracellular portion of the chain corresponds to 861–886 (FGKNYSELRHRISDSGLLPRWHMMDF). The N-linked (GlcNAc...) asparagine glycan is linked to Asn864. An intramembrane region (pore-forming) is located at residues 887–905 (FHAFLIIFRILCGEWIETM). Residues 906–914 (WDCMEVSGQ) lie on the Extracellular side of the membrane. Cys908 and Cys917 are oxidised to a cystine. The helical transmembrane segment at 915–943 (SLCLLVFLLVMVIGNLVVLNLFLALLLSS) threads the bilayer. The Cytoplasmic segment spans residues 944–1205 (FSADNLTAPD…LRKTCYRIVE (262 aa)). The interval 1000 to 1144 (HSQLPSCIAA…EDSYSEGSTA (145 aa)) is disordered. A compositionally biased stretch (basic and acidic residues) spans 1017-1036 (EVEKAPPARKETRFEEDKRP). Residues 1056 to 1075 (SDTDDQEEDEENSLGTEEEE) are compositionally biased toward acidic residues. A compositionally biased stretch (low complexity) spans 1098-1115 (SQVSETTSSEAEASTSQA). The stretch at 1189 to 1503 (PGKVWWRLRK…KKYYNAMKKL (315 aa)) is one III repeat. The helical transmembrane segment at 1206 to 1227 (HSWFETFIIFMILLSSGALAFE) threads the bilayer. Over 1228-1238 (DIYLEERKTIK) the chain is Extracellular. The helical transmembrane segment at 1239 to 1261 (VLLEYADKMFTYVFVLEMLLKWV) threads the bilayer. At 1262-1270 (AYGFKKYFT) the chain is on the cytoplasmic side. Residues 1271-1293 (NAWCWLDFLIVDVSLVSLVANTL) traverse the membrane as a helical segment. Topologically, residues 1294 to 1299 (GFAEMG) are extracellular. The helical transmembrane segment at 1300-1319 (PIKSLRTLRALRPLRALSRF) threads the bilayer. The Cytoplasmic portion of the chain corresponds to 1320 to 1332 (EGMRVVVNALVGA). The chain crosses the membrane as a helical span at residues 1333-1357 (IPSIMNVLLVCLIFWLIFSIMGVNL). The Extracellular portion of the chain corresponds to 1358 to 1402 (FAGKFGRCINQTEGDLPLNYTIVNNKSECESFNVTGELYWTKVKV). Asn1367, Asn1376, Asn1382, and Asn1390 each carry an N-linked (GlcNAc...) asparagine glycan. The pore-forming intramembrane region spans 1403-1424 (NFDNVGAGYLALLQVATFKGWM). The Extracellular portion of the chain corresponds to 1425–1447 (DIMYAAVDSRGYEEQPQWEDNLY). Residues 1448 to 1472 (MYIYFVVFIIFGSFFTLNLFIGVII) form a helical membrane-spanning segment. Residues 1473-1530 (DNFNQQKKKLGGQDIFMTEEQKKYYNAMKKLGSKKPQKPIPRPLNKYQGFIFDIVTKQ) are Cytoplasmic-facing. The residue at position 1505 (Ser1505) is a Phosphoserine; by PKC. One copy of the IV repeat lies at 1512-1809 (IPRPLNKYQG…WEKFDPEATQ (298 aa)). A helical transmembrane segment spans residues 1531–1549 (AFDVTIMFLICLNMVTMMV). The Extracellular portion of the chain corresponds to 1550–1560 (ETDDQSPEKVN). A helical transmembrane segment spans residues 1561 to 1582 (ILAKINLLFVAIFTGECIVKMA). The Cytoplasmic portion of the chain corresponds to 1583–1591 (ALRHYYFTN). The helical transmembrane segment at 1592–1614 (SWNIFDFVVVILSIVGTVLSDII) threads the bilayer. At 1615-1621 (QKYFFSP) the chain is on the extracellular side. The helical transmembrane segment at 1622–1642 (TLFRVIRLARIGRILRLIRGA) threads the bilayer. The Cytoplasmic portion of the chain corresponds to 1643–1652 (KGIRTLLFAL). A helical transmembrane segment spans residues 1653–1681 (MMSLPALFNIGLLLFLVMFIYSIFGMANF). The Extracellular portion of the chain corresponds to 1682 to 1699 (AYVKWEAGIDDMFNFQTF). Residues 1700–1716 (ANSMLCLFQITTSAGWD) constitute an intramembrane region (pore-forming). Residues 1717 to 1747 (GLLSPILNTGPPYCDPNLPNSNGSRGNCGSP) are Extracellular-facing. Residues 1748–1773 (AVGILFFTTYIIISFLIVVNMYIAII) traverse the membrane as a helical segment. Residues 1774–2019 (LENFSVATEE…SPDRDRESIV (246 aa)) lie on the Cytoplasmic side of the membrane. Residues 1841-1903 (DLPMVSGDRI…ITTTLRRKHE (63 aa)) are interaction with FGF13. In terms of domain architecture, IQ spans 1903-1932 (EEVSATVIQRAFRRHLLQRSVKHASFLFRQ). Low complexity predominate over residues 1963 to 1982 (SGPLSSSSISSTSFPPSYDS). A disordered region spans residues 1963-2019 (SGPLSSSSISSTSFPPSYDSVTRATSDNLPVRASDYSRSEDLADFPPSPDRDRESIV). The interval 1977–1980 (PPSY) is interaction with NEDD4, NEDD4L and WWP2.

The protein belongs to the sodium channel (TC 1.A.1.10) family. Nav1.5/SCN5A subfamily. As to quaternary structure, cannot form the same regulatory interactions with beta subunits as other Navs do. Interacts with the PDZ domain of the syntrophin SNTA1, SNTB1 and SNTB2. Interacts with NEDD4, NEDD4L, WWP2 and GPD1L. Interacts with CALM. Interacts with FGF13; the interaction is direct and may regulate SNC5A density at membranes and function. Interacts with FGF12 and FGF14. Interacts with ANK3. Interacts with PKP2 (via N-terminus). Interacts with TMEM233. Interacts with XIRP2; the interaction is required for normal action potential configuration in the heart. Phosphorylation at Ser-1505 by PKC in a highly conserved cytoplasmic loop slows inactivation of the sodium channel and reduces peak sodium currents. Regulated through phosphorylation by CaMK2D. Post-translationally, ubiquitinated by NEDD4L; which promotes its endocytosis. Does not seem to be ubiquitinated by NEDD4 or WWP2. In terms of processing, lacks the cysteine which covalently binds the conotoxin GVIIJ. This cysteine (position 868) is speculated in other sodium channel subunits alpha to be implied in covalent binding with the sodium channel subunit beta-2 or beta-4. N-glycosylated at Asn-318, probably hinders potential interaction with regulatory subunits. In terms of tissue distribution, expressed in the myocardium (at protein level).

It is found in the cell membrane. Its subcellular location is the cytoplasm. The protein resides in the perinuclear region. It localises to the sarcolemma. The protein localises to the T-tubule. It is found in the cell junction. The catalysed reaction is Na(+)(in) = Na(+)(out). Its activity is regulated as follows. Channel inactivation is regulated by intracellular calcium levels. It is a tetrodotoxin-resistant voltage-gated Na(+) channel (Nav). Pore-forming subunit of Nav1.5, a voltage-gated sodium (Nav) channel that directly mediates the depolarizing phase of action potentials in excitable membranes. Navs, also called VGSCs (voltage-gated sodium channels) or VDSCs (voltage-dependent sodium channels), operate by switching between closed and open conformations depending on the voltage difference across the membrane. In the open conformation they allow Na(+) ions to selectively pass through the pore, along their electrochemical gradient. The influx of Na(+) ions provokes membrane depolarization, initiating the propagation of electrical signals throughout cells and tissues. Nav1.5 is the predominant sodium channel expressed in myocardial cells and it is responsible for the initial upstroke of the action potential in cardiac myocytes, thereby initiating the heartbeat. Required for normal electrical conduction including formation of the infranodal ventricular conduction system and normal action potential configuration, as a result of its interaction with XIRP2. This Mus musculus (Mouse) protein is Sodium channel protein type 5 subunit alpha.